The primary structure comprises 253 residues: Phosphoadenosine 5'-phosphosulfate reductase (253 aa).

The active-site Nucleophile; cysteine thiosulfonate intermediate is C239.

This sequence belongs to the PAPS reductase family. CysH subfamily.

It is found in the cytoplasm. It carries out the reaction [thioredoxin]-disulfide + sulfite + adenosine 3',5'-bisphosphate + 2 H(+) = [thioredoxin]-dithiol + 3'-phosphoadenylyl sulfate. It functions in the pathway sulfur metabolism; hydrogen sulfide biosynthesis; sulfite from sulfate: step 3/3. Its function is as follows. Catalyzes the formation of sulfite from phosphoadenosine 5'-phosphosulfate (PAPS) using thioredoxin as an electron donor. This Photobacterium profundum (strain SS9) protein is Phosphoadenosine 5'-phosphosulfate reductase.